The sequence spans 262 residues: Phosphonates import ATP-binding protein PhnC (262 aa).

In terms of domain architecture, ABC transporter spans 5-253 (IRVEKLAKTF…RFDHLYRSIN (249 aa)). An ATP-binding site is contributed by 37–44 (GPSGSGKS).

The protein belongs to the ABC transporter superfamily. Phosphonates importer (TC 3.A.1.9.1) family. In terms of assembly, the complex is composed of two ATP-binding proteins (PhnC), two transmembrane proteins (PhnE) and a solute-binding protein (PhnD).

The protein resides in the cell inner membrane. It carries out the reaction phosphonate(out) + ATP + H2O = phosphonate(in) + ADP + phosphate + H(+). Part of the ABC transporter complex PhnCDE involved in phosphonates import. Responsible for energy coupling to the transport system. The protein is Phosphonates import ATP-binding protein PhnC of Escherichia coli O6:K15:H31 (strain 536 / UPEC).